We begin with the raw amino-acid sequence, 67 residues long: Alpha-actitoxin-Ms11a-3 (67 aa).

The signal sequence occupies residues M1–A24. Disulfide bonds link C26–C41, C33–C46, and C40–C61. K66 is subject to Lysine amide.

The protein localises to the secreted. The protein resides in the nematocyst. In terms of biological role, alpha-toxins act on postsynaptic membranes, they bind to the nicotinic acetylcholine receptors (nAChR) and thus inhibit them. This toxin shows inhibition against mouse alpha-1-beta-1-delta-epsilon (CHRNA1-CHRNB1-CHRND-CHRNE) (IC(50)=1215 nM), rat alpha-3-beta-4/CHRNA3-CHRNB4 (IC(50)=5.173 uM), rat alpha-7/CHRNA7 (IC(50)=4.786 uM), human alpha-7/CHRNA7 (IC(50)=8.869 uM), and rat alpha-9-alpha-10/CHRNA9-CHRNA10 (IC(50)=202 nM). Also competes with alpha-bungarotoxin for binding to orthosteric sites on muscle-type T.carlifornicus (IC(50)=256 nM) and human alpha-7/CHRNA7 nAChRs (IC(50)=19.81 uM). This Metridium senile (Brown sea anemone) protein is Alpha-actitoxin-Ms11a-3.